The following is a 67-amino-acid chain: Sperm protamine P1 (67 aa).

Residues 1-67 (MASYRNSRSR…RRRKRNNENK (67 aa)) form a disordered region. Composition is skewed to basic residues over residues 7 to 25 (SRSR…RSRV) and 34 to 67 (RSSR…NENK).

It belongs to the protamine P1 family. As to expression, testis.

The protein localises to the nucleus. The protein resides in the chromosome. In terms of biological role, protamines substitute for histones in the chromatin of sperm during the haploid phase of spermatogenesis. They compact sperm DNA into a highly condensed, stable and inactive complex. The chain is Sperm protamine P1 (PRM1) from Isoodon macrourus (Short-nosed bandicoot).